A 376-amino-acid chain; its full sequence is Mannosyl phosphorylinositol ceramide synthase CSH1 (376 aa).

2 consecutive transmembrane segments (helical) span residues 7–27 (ILII…FDLL) and 274–294 (ILSC…GEFT). The tract at residues 331 to 351 (NKEKRRNPTRHEYNSRGKRLR) is disordered. A Phosphoserine modification is found at Ser-354.

This sequence belongs to the glycosyltransferase 32 family. As to quaternary structure, heterodimer of CSH1 and CSG2.

It is found in the vacuole membrane. The catalysed reaction is a 1D-myo-inositol-1-phospho-N-[(R)-2-hydroxy-very-long-chain fatty acyl]-(R)-4-hydroxysphingoid base + GDP-alpha-D-mannose = an alpha-D-mannosyl-(1&lt;-&gt;6)-1D-myo-inositol-1-phospho-N-[(R)-2-hydroxy-very-long-chain fatty acyl]-(R)-4-hydroxysphingoid base + GDP + H(+). Its function is as follows. Involved in the synthesis of mannosyl phosphorylinositol ceramide. Catalyzes the addition of mannosyl to phosphorylinositol ceramide. The sequence is that of Mannosyl phosphorylinositol ceramide synthase CSH1 from Saccharomyces cerevisiae (strain ATCC 204508 / S288c) (Baker's yeast).